We begin with the raw amino-acid sequence, 331 residues long: Biotin synthase (331 aa).

The Radical SAM core domain maps to 39 to 264 (SELQTCYLIS…VFPRSMVRLA (226 aa)). 3 residues coordinate [4Fe-4S] cluster: Cys-54, Cys-58, and Cys-61. Cys-98, Cys-130, Cys-190, and Arg-262 together coordinate [2Fe-2S] cluster.

The protein belongs to the radical SAM superfamily. Biotin synthase family. Homodimer. The cofactor is [4Fe-4S] cluster. [2Fe-2S] cluster serves as cofactor.

It carries out the reaction (4R,5S)-dethiobiotin + (sulfur carrier)-SH + 2 reduced [2Fe-2S]-[ferredoxin] + 2 S-adenosyl-L-methionine = (sulfur carrier)-H + biotin + 2 5'-deoxyadenosine + 2 L-methionine + 2 oxidized [2Fe-2S]-[ferredoxin]. It functions in the pathway cofactor biosynthesis; biotin biosynthesis; biotin from 7,8-diaminononanoate: step 2/2. Functionally, catalyzes the conversion of dethiobiotin (DTB) to biotin by the insertion of a sulfur atom into dethiobiotin via a radical-based mechanism. In Chlamydia pneumoniae (Chlamydophila pneumoniae), this protein is Biotin synthase.